Here is a 160-residue protein sequence, read N- to C-terminus: Cytochrome b6-f complex subunit 4 (160 aa).

3 helical membrane passes run 36-56, 95-115, and 131-151; these read LLYI…GLAV, LLGV…PFLE, and TVFL…ALPI.

Belongs to the cytochrome b family. PetD subfamily. As to quaternary structure, the 4 large subunits of the cytochrome b6-f complex are cytochrome b6, subunit IV (17 kDa polypeptide, petD), cytochrome f and the Rieske protein, while the 4 small subunits are petG, petL, petM and petN. The complex functions as a dimer.

Its subcellular location is the plastid. It is found in the chloroplast thylakoid membrane. Functionally, component of the cytochrome b6-f complex, which mediates electron transfer between photosystem II (PSII) and photosystem I (PSI), cyclic electron flow around PSI, and state transitions. This chain is Cytochrome b6-f complex subunit 4, found in Psilotum nudum (Whisk fern).